Reading from the N-terminus, the 677-residue chain is Methionine--tRNA ligase (677 aa).

Residues 15–25 (PYANGSIHLGH) carry the 'HIGH' region motif. Zn(2+) is bound by residues C146, C149, C159, and C162. A 'KMSKS' region motif is present at residues 333–337 (KMSKS). K336 is an ATP binding site. In terms of domain architecture, tRNA-binding spans 575–677 (DFAKIDLRVA…DGAKPGQQVK (103 aa)).

It belongs to the class-I aminoacyl-tRNA synthetase family. MetG type 1 subfamily. As to quaternary structure, homodimer. Zn(2+) serves as cofactor.

The protein resides in the cytoplasm. The catalysed reaction is tRNA(Met) + L-methionine + ATP = L-methionyl-tRNA(Met) + AMP + diphosphate. Is required not only for elongation of protein synthesis but also for the initiation of all mRNA translation through initiator tRNA(fMet) aminoacylation. The sequence is that of Methionine--tRNA ligase from Salmonella paratyphi C (strain RKS4594).